The primary structure comprises 385 residues: Homoserine O-succinyltransferase (385 aa).

One can recognise an AB hydrolase-1 domain in the interval 46 to 355; sequence NAILICHALS…NSQHGHDAFL (310 aa). Ser-151 functions as the Nucleophile in the catalytic mechanism. Arg-221 contacts substrate. Catalysis depends on residues Asp-318 and His-351. Asp-352 lines the substrate pocket.

The protein belongs to the AB hydrolase superfamily. MetX family. As to quaternary structure, homodimer.

The protein resides in the cytoplasm. It carries out the reaction L-homoserine + succinyl-CoA = O-succinyl-L-homoserine + CoA. Its pathway is amino-acid biosynthesis; L-methionine biosynthesis via de novo pathway; O-succinyl-L-homoserine from L-homoserine: step 1/1. Transfers a succinyl group from succinyl-CoA to L-homoserine, forming succinyl-L-homoserine. In Hydrogenovibrio crunogenus (strain DSM 25203 / XCL-2) (Thiomicrospira crunogena), this protein is Homoserine O-succinyltransferase.